We begin with the raw amino-acid sequence, 239 residues long: MGQCLSGNQVAGVANNGGEQPSGSNILRLPKLYTPNPLLTKEEVEVRRNEFWETCWAYGGSKEIWDVLHKVVTLLYEGNAEAATEMALAADLTIPENDISKGVYDSKGTFYEIPKIVARIPRAFAERKDSLDDEDDNMISSNDPTKSPEEHDTTTKSIASLKDAELDSSLETVLIRYSKDDKDYSIQINPNLPFSHAKSQLEEVGLENVQRFFFLGRVLQFKKSLSQQGWTSGMIIQAM.

The segment at 129-155 (DSLDDEDDNMISSNDPTKSPEEHDTTT) is disordered. A Phosphoserine modification is found at Ser-160.

This is an uncharacterized protein from Schizosaccharomyces pombe (strain 972 / ATCC 24843) (Fission yeast).